Consider the following 275-residue polypeptide: Interleukin-2 receptor subunit alpha (275 aa).

The first 21 residues, 1–21 (MEPSLLMWRFFVFIVVPGCVT), serve as a signal peptide directing secretion. The Sushi 1 domain occupies 22–81 (EACHDDPPSLRNAMFKVFRYEVGTMINCDCKTGFRRVSAVMRCVGDSSHSAWENRCFCNS). The Extracellular portion of the chain corresponds to 22 to 243 (EACHDDPPSL…DTFIFTTEYQ (222 aa)). 3 cysteine pairs are disulfide-bonded: Cys24-Cys64, Cys49-Cys77, and Cys51-Cys79. N-linked (GlcNAc...) asparagine glycosylation is present at Asn80. The interval 88–130 (QVKQVTPAPEEHREKKHTDAQNQTQPPEEADLPGHCEEPPPWE) is disordered. Positions 96–106 (PEEHREKKHTD) are enriched in basic and acidic residues. An N-linked (GlcNAc...) asparagine glycan is attached at Asn109. Over residues 119–130 (LPGHCEEPPPWE) the composition is skewed to basic and acidic residues. Residues 121 to 186 (GHCEEPPPWE…WTRPRLKCIR (66 aa)) form the Sushi 2 domain. 2 cysteine pairs are disulfide-bonded: Cys123-Cys168 and Cys152-Cys184. The disordered stretch occupies residues 188–221 (GEHGQASDDAEPQESTEAPPGSGTFLPTRMAGTT). The helical transmembrane segment at 244–262 (IAVAGCTLLLASILLLSCL) threads the bilayer. At 263–275 (TWQRKWKKNRRTI) the chain is on the cytoplasmic side.

In terms of assembly, non-covalent dimer of an alpha and a beta subunit. IL2R exists in 3 different forms: a high affinity dimer, an intermediate affinity monomer (beta subunit), and a low affinity monomer (alpha subunit). The high and intermediate affinity forms also associate with a gamma subunit.

The protein resides in the membrane. In terms of biological role, receptor for interleukin-2. The receptor is involved in the regulation of immune tolerance by controlling regulatory T cells (TREGs) activity. TREGs suppress the activation and expansion of autoreactive T-cells. The polypeptide is Interleukin-2 receptor subunit alpha (IL2RA) (Bos taurus (Bovine)).